A 240-amino-acid chain; its full sequence is Ribosomal RNA small subunit methyltransferase J (240 aa).

Residues 93-94 (RD) and aspartate 162 contribute to the S-adenosyl-L-methionine site.

This sequence belongs to the methyltransferase superfamily. RsmJ family.

The protein resides in the cytoplasm. The catalysed reaction is guanosine(1516) in 16S rRNA + S-adenosyl-L-methionine = N(2)-methylguanosine(1516) in 16S rRNA + S-adenosyl-L-homocysteine + H(+). Functionally, specifically methylates the guanosine in position 1516 of 16S rRNA. This chain is Ribosomal RNA small subunit methyltransferase J, found in Francisella philomiragia subsp. philomiragia (strain ATCC 25017 / CCUG 19701 / FSC 153 / O#319-036).